A 56-amino-acid chain; its full sequence is Large ribosomal subunit protein eL20 (56 aa).

A disordered region spans residues 1-24 (MSTYTVRGSFPARDGPQQFEKEVE).

This sequence belongs to the eukaryotic ribosomal protein eL20 family. As to quaternary structure, part of the 50S ribosomal subunit. Binds 23S rRNA.

The sequence is that of Large ribosomal subunit protein eL20 from Haloarcula marismortui (strain ATCC 43049 / DSM 3752 / JCM 8966 / VKM B-1809) (Halobacterium marismortui).